The chain runs to 1151 residues: ATP-dependent RNA helicase ddx46 (1151 aa).

Basic and acidic residues-rich tracts occupy residues 1–26 and 35–51; these read MDEY…DNRN and YRDD…DRSH. Disordered regions lie at residues 1–138, 166–224, 287–358, and 424–449; these read MDEY…SRFD, MYQQ…VFQQ, QELK…PLVN, and TSQM…DKTI. Positions 52-73 are enriched in low complexity; the sequence is YNNNNNNNNNNNNNNNNNNGNG. Over residues 81-90 the composition is skewed to polar residues; it reads SSQNKYQNHH. Composition is skewed to low complexity over residues 91–124, 166–199, 207–224, and 291–339; these read QQSP…QPHI, MYQQ…FQHH, QPPV…VFQQ, and ASGS…TTSP. The span at 428–443 shows a compositional bias: acidic residues; the sequence is IDDDEKLEEESEGEDD. The Q motif motif lies at 509–537; the sequence is QSWAQAGLTEKVHLLLKKFQYEKPTSIQA. Positions 540–718 constitute a Helicase ATP-binding domain; that stretch reads IPAIMNGRDL…KKILNKPLEI (179 aa). An ATP-binding site is contributed by 553-560; sequence ARTGSGKT. The short motif at 666-669 is the DEAD box element; it reads DEAD. In terms of domain architecture, Helicase C-terminal spans 729–890; the sequence is DIEQFVEVRP…KVPDELRKLN (162 aa). Positions 904–972 are disordered; that stretch reads LLAPTGFTGR…EKEKQLLSEK (69 aa). A compositionally biased stretch (basic and acidic residues) spans 915-930; the sequence is HKFDAAEEDKKNIERK. Positions 938–948 are enriched in acidic residues; the sequence is IEEEEEEEDED. Over residues 949–972 the composition is skewed to basic and acidic residues; that stretch reads KEKAEKEKLAAASAEKEKQLLSEK.

It belongs to the DEAD box helicase family. DDX46/PRP5 subfamily. In terms of assembly, component of the 17S U2 SnRNP complex, a ribonucleoprotein complex that contains small nuclear RNA (snRNA) U2 and a number of specific proteins.

It is found in the nucleus speckle. The enzyme catalyses ATP + H2O = ADP + phosphate + H(+). Component of the 17S U2 SnRNP complex of the spliceosome, a large ribonucleoprotein complex that removes introns from transcribed pre-mRNAs. This is ATP-dependent RNA helicase ddx46 (helB1) from Dictyostelium discoideum (Social amoeba).